A 179-amino-acid polypeptide reads, in one-letter code: Large ribosomal subunit protein uL6 (179 aa).

This sequence belongs to the universal ribosomal protein uL6 family. Part of the 50S ribosomal subunit.

Its function is as follows. This protein binds to the 23S rRNA, and is important in its secondary structure. It is located near the subunit interface in the base of the L7/L12 stalk, and near the tRNA binding site of the peptidyltransferase center. The sequence is that of Large ribosomal subunit protein uL6 from Prochlorococcus marinus (strain SARG / CCMP1375 / SS120).